Consider the following 295-residue polypeptide: Bifunctional protein FolD (295 aa).

Residues 166–168, Ser195, and Ile236 contribute to the NADP(+) site; that span reads GRS.

It belongs to the tetrahydrofolate dehydrogenase/cyclohydrolase family. In terms of assembly, homodimer.

The enzyme catalyses (6R)-5,10-methylene-5,6,7,8-tetrahydrofolate + NADP(+) = (6R)-5,10-methenyltetrahydrofolate + NADPH. It carries out the reaction (6R)-5,10-methenyltetrahydrofolate + H2O = (6R)-10-formyltetrahydrofolate + H(+). It functions in the pathway one-carbon metabolism; tetrahydrofolate interconversion. Functionally, catalyzes the oxidation of 5,10-methylenetetrahydrofolate to 5,10-methenyltetrahydrofolate and then the hydrolysis of 5,10-methenyltetrahydrofolate to 10-formyltetrahydrofolate. This is Bifunctional protein FolD from Chlorobium luteolum (strain DSM 273 / BCRC 81028 / 2530) (Pelodictyon luteolum).